A 630-amino-acid chain; its full sequence is CREB-regulated transcription coactivator 1 (630 aa).

S64 and S113 each carry phosphoserine. 4 disordered regions span residues 142-174 (ADTS…GPQD), 187-221 (GMEE…VPGI), 256-331 (SPLP…LSPL), and 356-475 (QAGS…HTST). At T149 the chain carries Phosphothreonine. Position 151 is a phosphoserine; by SIK1 and SIK2 (S151). A compositionally biased stretch (polar residues) spans 151–167 (SDSALHQSTMTPTQAES). T161 is modified (phosphothreonine). The segment covering 194-208 (ETDKTLSKQSWDSKK) has biased composition (basic and acidic residues). Residues 242 to 258 (TGGSLPDLSTIHFPSPL) carry the Nuclear export signal motif. Residues 256 to 270 (SPLPTPLDPEEPPFP) are compositionally biased toward pro residues. 2 stretches are compositionally biased toward polar residues: residues 292–301 (GMNTPSSSPQ) and 310–331 (LSLS…LSPL). The span at 361–384 (QPPPQPQPPPPPPPVSQQQPPPPQ) shows a compositional bias: pro residues. Positions 385–394 (VSVGLPQGGP) are enriched in low complexity. Composition is skewed to polar residues over residues 414 to 426 (VPST…TESP) and 450 to 475 (PATQ…HTST).

It belongs to the TORC family. As to quaternary structure, binds, as a tetramer, through its N-terminal region, with the bZIP domain of CREB1. 'Arg-314' in the bZIP domain of CREB1 is essential for this interaction. Interaction, via its C-terminal, with TAF4, enhances recruitment of TAF4 to CREB1. Interacts with 14-3-3 proteins, including YWHAE/14-3-3 epsilon. Interacts with calmodulin-dependent catalytic subunit PPP3CA/calcineurin A. In terms of processing, phosphorylation/dephosphorylation states of Ser-151 are required for regulating transduction of CREB activity. TORCs are inactive when phosphorylated, and active when dephosphorylated at this site. This primary site of phosphorylation is mediated by SIKs (SIK1 and SIK2), is regulated by cAMP and calcium levels and is dependent on the phosphorylation of SIKs by LKB1. As to expression, highly expressed in developing cortical neurons, peaking during dendrite development.

The protein resides in the cytoplasm. It localises to the nucleus. Its function is as follows. Transcriptional coactivator for CREB1 which activates transcription through both consensus and variant cAMP response element (CRE) sites. Acts as a coactivator, in the SIK/TORC signaling pathway, being active when dephosphorylated and acts independently of CREB1 'Ser-133' phosphorylation. Enhances the interaction of CREB1 with TAF4. Regulates the expression of specific CREB-activated genes such as the steroidogenic gene, StAR. Potent coactivator of PGC1alpha and inducer of mitochondrial biogenesis in muscle cells. In the hippocampus, involved in late-phase long-term potentiation (L-LTP) maintenance at the Schaffer collateral-CA1 synapses. May be required for dendritic growth of developing cortical neurons. In concert with SIK1, regulates the light-induced entrainment of the circadian clock. In response to light stimulus, coactivates the CREB-mediated transcription of PER1 which plays an important role in the photic entrainment of the circadian clock. This Rattus norvegicus (Rat) protein is CREB-regulated transcription coactivator 1 (Crtc1).